The sequence spans 264 residues: 3-methyl-2-oxobutanoate hydroxymethyltransferase (264 aa).

Asp45 and Asp84 together coordinate Mg(2+). 3-methyl-2-oxobutanoate is bound by residues 45 to 46 (DS), Asp84, and Lys112. Glu114 contributes to the Mg(2+) binding site. The Proton acceptor role is filled by Glu181.

The protein belongs to the PanB family. As to quaternary structure, homodecamer; pentamer of dimers. The cofactor is Mg(2+).

The protein localises to the cytoplasm. The catalysed reaction is 3-methyl-2-oxobutanoate + (6R)-5,10-methylene-5,6,7,8-tetrahydrofolate + H2O = 2-dehydropantoate + (6S)-5,6,7,8-tetrahydrofolate. It participates in cofactor biosynthesis; (R)-pantothenate biosynthesis; (R)-pantoate from 3-methyl-2-oxobutanoate: step 1/2. Functionally, catalyzes the reversible reaction in which hydroxymethyl group from 5,10-methylenetetrahydrofolate is transferred onto alpha-ketoisovalerate to form ketopantoate. This chain is 3-methyl-2-oxobutanoate hydroxymethyltransferase, found in Escherichia coli O81 (strain ED1a).